The sequence spans 633 residues: Guanylate-binding protein 6 (633 aa).

Residues 1 to 310 are GTPase domain (Globular); sequence MESGPKMLAP…EAVNSGAVPC (310 aa). The 243-residue stretch at 35–277 folds into the GB1/RHD3-type G domain; the sequence is SQPVVVVAIV…FSSYIFTHAR (243 aa). GTP is bound by residues 45–52, 67–69, and 97–101; these read GLYRTGKS, LGS, and DTEGL.

The protein belongs to the TRAFAC class dynamin-like GTPase superfamily. GB1/RHD3 GTPase family. GB1 subfamily.

The protein resides in the cytoplasmic vesicle. It catalyses the reaction GTP + H2O = GDP + phosphate + H(+). Functionally, interferon (IFN)-inducible GTPase that plays important roles in innate immunity against a diverse range of bacterial, viral and protozoan pathogens, such as bacterial pathogens Listeria monocytogenes and Mycobacterium bovis BCG as well as the protozoan pathogen Toxoplasma gondii. Confers protection to several pathogens, including the bacterial pathogens Listeria monocytogenes and Mycobacterium bovis BCG as well as the protozoan pathogen Toxoplasma gondii. This is Guanylate-binding protein 6 (GBP6) from Pongo abelii (Sumatran orangutan).